A 147-amino-acid chain; its full sequence is MRVVLLASGVLCLLAGQVLSICSPVDYTLYVEKPECDFCVAINTTICMGFCYSLDPNVVGPAVKRLAVQRGCTYQAVEYRTAELPGCPPHVDPRFSYPVALHCTCRACDPARDECTHRASADGDRCSKPLLLHMHAYPGQSNHIQTL.

Positions 1–20 (MRVVLLASGVLCLLAGQVLS) are cleaved as a signal peptide. Cystine bridges form between cysteine 22–cysteine 72, cysteine 36–cysteine 87, cysteine 39–cysteine 126, cysteine 47–cysteine 103, cysteine 51–cysteine 105, and cysteine 108–cysteine 115. Asparagine 43 carries an N-linked (GlcNAc...) asparagine glycan.

This sequence belongs to the glycoprotein hormones subunit beta family. Heterodimer of a common alpha chain and a unique beta chain which confers biological specificity to thyrotropin, lutropin, follitropin and gonadotropin.

It is found in the secreted. Indispensable for the control of thyroid structure and metabolism. May play some role in the biological processes of the immature fishes. The polypeptide is Thyrotropin subunit beta (tshb) (Anguilla japonica (Japanese eel)).